A 205-amino-acid polypeptide reads, in one-letter code: ESCRT-related protein CHMP1 (205 aa).

2 coiled-coil regions span residues Asp-13–Ala-51 and Gly-109–Ala-140.

Belongs to the SNF7 family.

The protein resides in the cytoplasm. It is found in the endosome membrane. Functionally, involved in ESCRT-dependent multivesicular body (MVB) formation and sorting of endosomal cargo proteins into MVBs. This Oryza sativa subsp. japonica (Rice) protein is ESCRT-related protein CHMP1.